The chain runs to 366 residues: DNA repair protein RAD51 homolog 3 (366 aa).

Positions 1-117 (MQRELVSFPL…LMKTTEVCGV (117 aa)) are required for Holliday junction resolution activity. S11 carries the phosphoserine modification. Positions 70-127 (SVAGKKYTALELLEQEHTQGFIITFCSALDNILGGGIPLMKTTEVCGVPGVGKTQLCM) are interaction with RAD51B, RAD51D and XRCC3. 116-123 (GVPGVGKT) lines the ATP pocket. The interval 338 to 366 (RDAAVTASSSQTEGSSNLRKRSREPEEGC) is disordered. The span at 343-354 (TASSSQTEGSSN) shows a compositional bias: polar residues. Residues 356-360 (RKRSR) carry the Nuclear localization signal motif.

Belongs to the RecA family. RAD51 subfamily. Part of the RAD51 paralog protein complexes BCDX2 and CX3; the complexes have a ring-like structure arranged into a flat disc around a central channel. The BCDX2 complex consits of RAD51B, RAD51C, RAD51D and XRCC2; the CX3 complex consists of RAD51C and XRCC3. The BCDX2 subcomplex RAD51B:RAD51C interacts with RAD51. Interacts with SWSAP1; involved in homologous recombination repair. Interacts directly with PALB2 which may serve as a scaffold for a HR complex containing PALB2, BRCA2, RAD51C, RAD51 and XRCC3. Interacts with HELQ.

It localises to the nucleus. It is found in the cytoplasm. The protein localises to the perinuclear region. Its subcellular location is the mitochondrion. Essential for the homologous recombination (HR) pathway of DNA repair. Involved in the homologous recombination repair (HRR) pathway of double-stranded DNA breaks arising during DNA replication or induced by DNA-damaging agents. Part of the RAD51 paralog protein complexes BCDX2 and CX3 which act at different stages of the BRCA1-BRCA2-dependent HR pathway. Upon DNA damage, BCDX2 seems to act downstream of BRCA2 recruitment and upstream of RAD51 recruitment; CX3 seems to act downstream of RAD51 recruitment; both complexes bind predominantly to the intersection of the four duplex arms of the Holliday junction (HJ) and to junction of replication forks. The BCDX2 complex was originally reported to bind single-stranded DNA, single-stranded gaps in duplex DNA and specifically to nicks in duplex DNA. The BCDX2 subcomplex RAD51B:RAD51C exhibits single-stranded DNA-dependent ATPase activity suggesting an involvement in early stages of the HR pathway. Involved in RAD51 foci formation in response to DNA damage suggesting an involvement in early stages of HR probably in the invasion step. Has an early function in DNA repair in facilitating phosphorylation of the checkpoint kinase CHEK2 and thereby transduction of the damage signal, leading to cell cycle arrest and HR activation. Participates in branch migration and HJ resolution and thus is important for processing HR intermediates late in the DNA repair process; the function may be linked to the CX3 complex. Part of a PALB2-scaffolded HR complex containing BRCA2 and which is thought to play a role in DNA repair by HR. Protects RAD51 from ubiquitin-mediated degradation that is enhanced following DNA damage. Plays a role in regulating mitochondrial DNA copy number under conditions of oxidative stress in the presence of RAD51 and XRCC3. Contributes to DNA cross-link resistance, sister chromatid cohesion and genomic stability. Involved in maintaining centrosome number in mitosis. This chain is DNA repair protein RAD51 homolog 3 (RAD51C), found in Cricetulus griseus (Chinese hamster).